The following is a 285-amino-acid chain: Acetyl-coenzyme A carboxylase carboxyl transferase subunit beta (285 aa).

In terms of domain architecture, CoA carboxyltransferase N-terminal spans 29 to 285 (IMTKCPNCKK…ILKIHQEVSN (257 aa)). Residues Cys-33, Cys-36, Cys-52, and Cys-55 each contribute to the Zn(2+) site. A C4-type zinc finger spans residues 33–55 (CPNCKKIMYTKELNENLNVCFNC).

This sequence belongs to the AccD/PCCB family. Acetyl-CoA carboxylase is a heterohexamer composed of biotin carboxyl carrier protein (AccB), biotin carboxylase (AccC) and two subunits each of ACCase subunit alpha (AccA) and ACCase subunit beta (AccD). Zn(2+) serves as cofactor.

It is found in the cytoplasm. It catalyses the reaction N(6)-carboxybiotinyl-L-lysyl-[protein] + acetyl-CoA = N(6)-biotinyl-L-lysyl-[protein] + malonyl-CoA. Its pathway is lipid metabolism; malonyl-CoA biosynthesis; malonyl-CoA from acetyl-CoA: step 1/1. Functionally, component of the acetyl coenzyme A carboxylase (ACC) complex. Biotin carboxylase (BC) catalyzes the carboxylation of biotin on its carrier protein (BCCP) and then the CO(2) group is transferred by the transcarboxylase to acetyl-CoA to form malonyl-CoA. The sequence is that of Acetyl-coenzyme A carboxylase carboxyl transferase subunit beta from Staphylococcus epidermidis (strain ATCC 35984 / DSM 28319 / BCRC 17069 / CCUG 31568 / BM 3577 / RP62A).